We begin with the raw amino-acid sequence, 234 residues long: Myelin protein zero-like protein 3 (234 aa).

An N-terminal signal peptide occupies residues 1–31; it reads MQQSGVPGSRGCALCPLLGVLFFQGVYVIFS. Residues 32-148 form the Ig-like V-type domain; that stretch reads LEIKADAHVR…NIPATELTVT (117 aa). Topologically, residues 32-158 are extracellular; that stretch reads LEIKADAHVR…ERGFGTMLSS (127 aa). The cysteines at positions 52 and 128 are disulfide-linked. Residue N123 is glycosylated (N-linked (GlcNAc...) asparagine). A helical transmembrane segment spans residues 159-179; it reads VALLSILVFIPSTVVVILLLV. Topologically, residues 180 to 234 are cytoplasmic; the sequence is RMGRKSAGLKKRSKSGYKKSSIEVSDDTDQEGDDCMAKLCVRCAECVDSDYEETY.

The protein belongs to the myelin P0 protein family.

The protein localises to the membrane. Its function is as follows. Mediates homophilic cell-cell adhesion. This is Myelin protein zero-like protein 3 (MPZL3) from Bos taurus (Bovine).